A 172-amino-acid chain; its full sequence is Large ribosomal subunit protein bL17m (172 aa).

The N-terminal 8 residues, 1–8 (MRLSFAAA), are a transit peptide targeting the mitochondrion.

Belongs to the bacterial ribosomal protein bL17 family. As to quaternary structure, component of the mitochondrial ribosome large subunit (39S) which comprises a 16S rRNA and about 50 distinct proteins.

The protein resides in the mitochondrion. The chain is Large ribosomal subunit protein bL17m (MRPL17) from Bos taurus (Bovine).